The following is a 549-amino-acid chain: Glucose-6-phosphate isomerase (549 aa).

The Proton donor role is filled by Glu353. Catalysis depends on residues His384 and Lys510.

Belongs to the GPI family.

It localises to the cytoplasm. It catalyses the reaction alpha-D-glucose 6-phosphate = beta-D-fructose 6-phosphate. It functions in the pathway carbohydrate biosynthesis; gluconeogenesis. It participates in carbohydrate degradation; glycolysis; D-glyceraldehyde 3-phosphate and glycerone phosphate from D-glucose: step 2/4. Functionally, catalyzes the reversible isomerization of glucose-6-phosphate to fructose-6-phosphate. This is Glucose-6-phosphate isomerase from Mycolicibacterium smegmatis (Mycobacterium smegmatis).